We begin with the raw amino-acid sequence, 146 residues long: Hemoglobin subunit beta-2 (146 aa).

In terms of domain architecture, Globin spans glutamate 2–histidine 146. Residues histidine 63 and histidine 92 each coordinate heme b.

Belongs to the globin family. Hb 2 is a heterotetramer of two alpha-2 and two beta-2 chains. As to expression, red blood cells.

Involved in oxygen transport from gills to the various peripheral tissues. This Gobionotothen gibberifrons (Humped rockcod) protein is Hemoglobin subunit beta-2 (hbb2).